A 186-amino-acid chain; its full sequence is Ribosome-recycling factor (186 aa).

The protein belongs to the RRF family.

It is found in the cytoplasm. Responsible for the release of ribosomes from messenger RNA at the termination of protein biosynthesis. May increase the efficiency of translation by recycling ribosomes from one round of translation to another. The sequence is that of Ribosome-recycling factor from Rickettsia prowazekii (strain Madrid E).